We begin with the raw amino-acid sequence, 988 residues long: Exportin-T (988 aa).

The protein belongs to the exportin family.

The protein resides in the nucleus. The protein localises to the cytoplasm. TRNA nucleus export receptor which facilitates tRNA translocation across the nuclear pore complex. Involved in pre-tRNA splicing, probably by affecting the interaction of pre-tRNA with splicing endonuclease. The protein is Exportin-T (LOS1) of Lodderomyces elongisporus (strain ATCC 11503 / CBS 2605 / JCM 1781 / NBRC 1676 / NRRL YB-4239) (Yeast).